We begin with the raw amino-acid sequence, 258 residues long: Snake venom serine proteinase 8 (258 aa).

Residues 1 to 18 (MVLIRVLANLLILQLSYA) form the signal peptide. The propeptide occupies 19-24 (QKSSEL). Residues 25-249 (VIGGDECNIN…YNDWIQSIIA (225 aa)) enclose the Peptidase S1 domain. 6 disulfides stabilise this stretch: cysteine 31/cysteine 163, cysteine 50/cysteine 66, cysteine 98/cysteine 256, cysteine 142/cysteine 210, cysteine 174/cysteine 189, and cysteine 200/cysteine 225. Asparagine 44 is a glycosylation site (N-linked (GlcNAc...) asparagine). Catalysis depends on charge relay system residues histidine 65 and aspartate 110. Catalysis depends on serine 204, which acts as the Charge relay system.

This sequence belongs to the peptidase S1 family. Snake venom subfamily. As to quaternary structure, monomer. As to expression, expressed by the venom gland.

It localises to the secreted. Its function is as follows. Snake venom serine protease that may act in the hemostasis system of the prey. The protein is Snake venom serine proteinase 8 of Crotalus adamanteus (Eastern diamondback rattlesnake).